Reading from the N-terminus, the 258-residue chain is MRRLLIIGNWKLNGNKNTITNLIITLVNTFYNISKCNVAIAPPVMYLDITKRYLLNSRIQLCAQNVDIHLSGSFTGDISAEMLQDLNVRYALIGHSERRIHHKENDAYIAKKFFILKKVGLIPILCVGENKREYDSGYTQSVCINQINTIITLLGIEAFKNSVIAYEPIWAIGSGASASPENAQLVHKSIRDYIASYDTSIADKITIQYGGSVTPENVTKFFDQKDIDGVLVGAASLNANSFSMIVQTAENHKKSYPA.

Substrate is bound at residue 9 to 11; sequence NWK. The Electrophile role is filled by histidine 95. The Proton acceptor role is filled by glutamate 167. Residues glycine 173 and serine 212 each coordinate substrate.

The protein belongs to the triosephosphate isomerase family. In terms of assembly, homodimer.

It is found in the cytoplasm. It carries out the reaction D-glyceraldehyde 3-phosphate = dihydroxyacetone phosphate. It functions in the pathway carbohydrate biosynthesis; gluconeogenesis. The protein operates within carbohydrate degradation; glycolysis; D-glyceraldehyde 3-phosphate from glycerone phosphate: step 1/1. Involved in the gluconeogenesis. Catalyzes stereospecifically the conversion of dihydroxyacetone phosphate (DHAP) to D-glyceraldehyde-3-phosphate (G3P). The protein is Triosephosphate isomerase of Blochmanniella pennsylvanica (strain BPEN).